The following is a 201-amino-acid chain: MLAFTLRFIKNKRYFAILAGALVIIAGLTSQHAWSGNGLPQINGKALAALAKQHPVVVLFRHAERCDRSDNTCLSDSTGITVKGAQDARALGKAFSADIQNYNLYSSNTVRTIQSATWFSAGRSLTVDKKMMDCGSGIYASINTLLKKSQNKNIVIFTHNHCLTYIAKNKRGVKFDPDYLNALVMHAENGKLFLDGEFVPG.

A signal peptide spans 1 to 35 (MLAFTLRFIKNKRYFAILAGALVIIAGLTSQHAWS).

This sequence belongs to the phosphoglycerate mutase family. Ais subfamily.

The protein resides in the periplasm. The protein operates within bacterial outer membrane biogenesis; lipopolysaccharide metabolism. Its function is as follows. Catalyzes the dephosphorylation of heptose(II) of the outer membrane lipopolysaccharide core. The sequence is that of Lipopolysaccharide core heptose(II)-phosphate phosphatase from Salmonella enteritidis PT4 (strain P125109).